The primary structure comprises 379 residues: MNPRLRVYIFAGIFLFIALIILIKIFFEEEKFDVLVVSLDSKEKTSKECLSNLQSVSIPVPALIIDKTVLKAIYQENCEHIFERKIKIGIDKRNWKLIANHNESSIFECIRMENKTSNDYLQFDTQPARAVLKNFNTFSIGNLHIPSNIPLFLKMWERSEIRGCLNLIVHRNMTKSQQFNHGKEAAEKLAEFRDVLLTFNMFAFLNGGTLLGWYRECGFIPHTADIDLAMFAEDFHPEITHFLLSRTSSFQLLRSLGMLNDSYELTVTPKTGYIVNMDLFLMYKDVHKNGSVINWVGGASNDIKYKYTYPAYDPWCAADLHGHLFWVTCSPQKMLVFEYGNLWYEDHPSSQYDWRSTAKNVRTNGLWSDVELKNVSKLY.

The chain crosses the membrane as a helical span at residues 7-27; that stretch reads VYIFAGIFLFIALIILIKIFF.

Its subcellular location is the membrane. This is an uncharacterized protein from Caenorhabditis elegans.